Consider the following 370-residue polypeptide: Queuine tRNA-ribosyltransferase (370 aa).

Asp-92 acts as the Proton acceptor in catalysis. Substrate contacts are provided by residues 92 to 96, Asp-146, Gln-190, and Gly-217; that span reads DSGGF. Residues 248–254 are RNA binding; it reads GVGTPEN. Asp-267 acts as the Nucleophile in catalysis. Zn(2+) is bound by residues Cys-305, Cys-307, Cys-310, and His-336.

This sequence belongs to the queuine tRNA-ribosyltransferase family. As to quaternary structure, homodimer. Within each dimer, one monomer is responsible for RNA recognition and catalysis, while the other monomer binds to the replacement base PreQ1. Zn(2+) is required as a cofactor.

The catalysed reaction is 7-aminomethyl-7-carbaguanine + guanosine(34) in tRNA = 7-aminomethyl-7-carbaguanosine(34) in tRNA + guanine. Its pathway is tRNA modification; tRNA-queuosine biosynthesis. Functionally, catalyzes the base-exchange of a guanine (G) residue with the queuine precursor 7-aminomethyl-7-deazaguanine (PreQ1) at position 34 (anticodon wobble position) in tRNAs with GU(N) anticodons (tRNA-Asp, -Asn, -His and -Tyr). Catalysis occurs through a double-displacement mechanism. The nucleophile active site attacks the C1' of nucleotide 34 to detach the guanine base from the RNA, forming a covalent enzyme-RNA intermediate. The proton acceptor active site deprotonates the incoming PreQ1, allowing a nucleophilic attack on the C1' of the ribose to form the product. After dissociation, two additional enzymatic reactions on the tRNA convert PreQ1 to queuine (Q), resulting in the hypermodified nucleoside queuosine (7-(((4,5-cis-dihydroxy-2-cyclopenten-1-yl)amino)methyl)-7-deazaguanosine). The chain is Queuine tRNA-ribosyltransferase from Desulforapulum autotrophicum (strain ATCC 43914 / DSM 3382 / VKM B-1955 / HRM2) (Desulfobacterium autotrophicum).